The sequence spans 382 residues: Anhydro-N-acetylmuramic acid kinase (382 aa).

22 to 29 contributes to the ATP binding site; the sequence is GTSMDGVD.

It belongs to the anhydro-N-acetylmuramic acid kinase family.

It carries out the reaction 1,6-anhydro-N-acetyl-beta-muramate + ATP + H2O = N-acetyl-D-muramate 6-phosphate + ADP + H(+). It functions in the pathway amino-sugar metabolism; 1,6-anhydro-N-acetylmuramate degradation. The protein operates within cell wall biogenesis; peptidoglycan recycling. In terms of biological role, catalyzes the specific phosphorylation of 1,6-anhydro-N-acetylmuramic acid (anhMurNAc) with the simultaneous cleavage of the 1,6-anhydro ring, generating MurNAc-6-P. Is required for the utilization of anhMurNAc either imported from the medium or derived from its own cell wall murein, and thus plays a role in cell wall recycling. This Burkholderia vietnamiensis (strain G4 / LMG 22486) (Burkholderia cepacia (strain R1808)) protein is Anhydro-N-acetylmuramic acid kinase.